A 313-amino-acid polypeptide reads, in one-letter code: Malate dehydrogenase (313 aa).

Residues 11–16 (GAGNIG) and D35 contribute to the NAD(+) site. Positions 84 and 90 each coordinate substrate. Residues N97 and 120–122 (VTN) contribute to the NAD(+) site. N122 and R153 together coordinate substrate. The active-site Proton acceptor is H177.

The protein belongs to the LDH/MDH superfamily. MDH type 3 family.

It catalyses the reaction (S)-malate + NAD(+) = oxaloacetate + NADH + H(+). Functionally, catalyzes the reversible oxidation of malate to oxaloacetate. This is Malate dehydrogenase from Ehrlichia canis (strain Jake).